Reading from the N-terminus, the 47-residue chain is U18-ctenitoxin-Pn1a (47 aa).

Cystine bridges form between Cys-2–Cys-16, Cys-9–Cys-22, Cys-13–Cys-46, Cys-15–Cys-34, and Cys-24–Cys-32.

Expressed by the venom gland.

The protein resides in the secreted. In terms of biological role, neurotoxin. Causes spastic paralysis and death in mice by intracerebroventricular injection at dose levels of 3 ug per mouse. In Phoneutria nigriventer (Brazilian armed spider), this protein is U18-ctenitoxin-Pn1a.